Consider the following 311-residue polypeptide: Transcription initiation factor IIB (311 aa).

Residues 11 to 42 form a TFIIB-type zinc finger; sequence KETKCPECGSTKLINDHERGEVVCGACGLVID. Cys15, Cys18, Cys34, and Cys37 together coordinate Zn(2+). 2 consecutive repeat copies span residues 128–211 and 222–303.

The protein belongs to the TFIIB family.

Functionally, stabilizes TBP binding to an archaeal box-A promoter. Also responsible for recruiting RNA polymerase II to the pre-initiation complex (DNA-TBP-TFIIB). This is Transcription initiation factor IIB from Methanosphaera stadtmanae (strain ATCC 43021 / DSM 3091 / JCM 11832 / MCB-3).